Reading from the N-terminus, the 294-residue chain is Small ribosomal subunit protein uS2 (294 aa).

Residues 256 to 274 (SGKFIMDEDPDSKKTKTAE) show a composition bias toward basic and acidic residues. The segment at 256–294 (SGKFIMDEDPDSKKTKTAEEPSATIEPSTTTTVEVDQNE) is disordered. Positions 280–294 (IEPSTTTTVEVDQNE) are enriched in polar residues.

Belongs to the universal ribosomal protein uS2 family.

In Leptospira interrogans serogroup Icterohaemorrhagiae serovar Lai (strain 56601), this protein is Small ribosomal subunit protein uS2.